A 257-amino-acid polypeptide reads, in one-letter code: S-methyl-5'-thioadenosine phosphorylase (257 aa).

Phosphate-binding positions include S10 and 50-51; that span reads RH. Position 180 (M180) interacts with substrate. T181 serves as a coordination point for phosphate. 204–206 provides a ligand contact to substrate; that stretch reads DYD.

The protein belongs to the PNP/MTAP phosphorylase family. MTAP subfamily. As to quaternary structure, homohexamer. Dimer of a homotrimer.

It carries out the reaction S-methyl-5'-thioadenosine + phosphate = 5-(methylsulfanyl)-alpha-D-ribose 1-phosphate + adenine. The protein operates within amino-acid biosynthesis; L-methionine biosynthesis via salvage pathway; S-methyl-5-thio-alpha-D-ribose 1-phosphate from S-methyl-5'-thioadenosine (phosphorylase route): step 1/1. Functionally, catalyzes the reversible phosphorylation of S-methyl-5'-thioadenosine (MTA) to adenine and 5-methylthioribose-1-phosphate. Involved in the breakdown of MTA, a major by-product of polyamine biosynthesis. Responsible for the first step in the methionine salvage pathway after MTA has been generated from S-adenosylmethionine. Has broad substrate specificity with 6-aminopurine nucleosides as preferred substrates. The protein is S-methyl-5'-thioadenosine phosphorylase (mntP) of Pyrococcus abyssi (strain GE5 / Orsay).